We begin with the raw amino-acid sequence, 351 residues long: Polycomb group RING finger protein 6 (351 aa).

Residues 1–114 are disordered; sequence MEEAETDATE…FSLRLESGRA (114 aa). Positions 9–19 are enriched in basic and acidic residues; that stretch reads TENKRASEAKR. The span at 24–37 shows a compositional bias: pro residues; the sequence is LPPPPPPISPPALI. Ser-32 bears the Phosphoserine mark. Residues 38–51 show a composition bias toward low complexity; that stretch reads PAPAAGEEGPASLA. Residues 62–80 are compositionally biased toward basic and acidic residues; the sequence is RPPELEPERSLGRLRGRFE. Residues 69 to 110 adopt a coiled-coil conformation; that stretch reads ERSLGRLRGRFEDYDEELEEDEEMEEEEEEEEEMSHFSLRLE. The segment covering 81-101 has biased composition (acidic residues); it reads DYDEELEEDEEMEEEEEEEEE. Phosphoserine is present on Ser-116. Residues 135 to 174 form an RING-type zinc finger; sequence CSICKGYLIDATTITECLHTFCKSCIVRHFYYSNRCPKCN. Glycyl lysine isopeptide (Lys-Gly) (interchain with G-Cter in SUMO2) cross-links involve residues Lys-224 and Lys-235.

As to quaternary structure, component of a PRC1-like complex. Interacts with BMI1/PCGF4, RING1 and RNF2. Interacts with KDM5D. Interacts with CBX4, CBX6, CBX7 and CBX8. Phosphorylated during mitosis.

Its subcellular location is the nucleus. Transcriptional repressor. May modulate the levels of histone H3K4Me3 by activating KDM5D histone demethylase. Component of a Polycomb group (PcG) multiprotein PRC1-like complex, a complex class required to maintain the transcriptionally repressive state of many genes, including Hox genes, throughout development. PcG PRC1 complex acts via chromatin remodeling and modification of histones; it mediates monoubiquitination of histone H2A 'Lys-119', rendering chromatin heritably changed in its expressibility. Within the PRC1-like complex, regulates RNF2 ubiquitin ligase activity. The sequence is that of Polycomb group RING finger protein 6 (Pcgf6) from Rattus norvegicus (Rat).